We begin with the raw amino-acid sequence, 486 residues long: Inosine-5'-monophosphate dehydrogenase (486 aa).

2 consecutive CBS domains span residues 99-154 and 156-215; these read IVED…LVKE and MTKE…VRDE. Residues aspartate 247 and 294-296 contribute to the NAD(+) site; that span reads GIG. K(+)-binding residues include glycine 296 and glycine 298. Position 299 (serine 299) interacts with IMP. K(+) is bound at residue cysteine 301. Cysteine 301 serves as the catalytic Thioimidate intermediate. IMP is bound by residues 334–336, 357–358, and 381–385; these read DGG, GN, and YRGMG. Arginine 397 acts as the Proton acceptor in catalysis. Glutamate 412 contributes to the IMP binding site. 3 residues coordinate K(+): glutamate 466, serine 467, and histidine 468.

The protein belongs to the IMPDH/GMPR family. In terms of assembly, homotetramer. Requires K(+) as cofactor.

It catalyses the reaction IMP + NAD(+) + H2O = XMP + NADH + H(+). It functions in the pathway purine metabolism; XMP biosynthesis via de novo pathway; XMP from IMP: step 1/1. Its activity is regulated as follows. Mycophenolic acid (MPA) is a non-competitive inhibitor that prevents formation of the closed enzyme conformation by binding to the same site as the amobile flap. In contrast, mizoribine monophosphate (MZP) is a competitive inhibitor that induces the closed conformation. MPA is a potent inhibitor of mammalian IMPDHs but a poor inhibitor of the bacterial enzymes. MZP is a more potent inhibitor of bacterial IMPDH. In terms of biological role, catalyzes the conversion of inosine 5'-phosphate (IMP) to xanthosine 5'-phosphate (XMP), the first committed and rate-limiting step in the de novo synthesis of guanine nucleotides, and therefore plays an important role in the regulation of cell growth. This Pyrococcus horikoshii (strain ATCC 700860 / DSM 12428 / JCM 9974 / NBRC 100139 / OT-3) protein is Inosine-5'-monophosphate dehydrogenase.